A 242-amino-acid polypeptide reads, in one-letter code: 3-deoxy-manno-octulosonate cytidylyltransferase (242 aa).

The protein belongs to the KdsB family.

The protein resides in the cytoplasm. The catalysed reaction is 3-deoxy-alpha-D-manno-oct-2-ulosonate + CTP = CMP-3-deoxy-beta-D-manno-octulosonate + diphosphate. It participates in nucleotide-sugar biosynthesis; CMP-3-deoxy-D-manno-octulosonate biosynthesis; CMP-3-deoxy-D-manno-octulosonate from 3-deoxy-D-manno-octulosonate and CTP: step 1/1. Its pathway is bacterial outer membrane biogenesis; lipopolysaccharide biosynthesis. In terms of biological role, activates KDO (a required 8-carbon sugar) for incorporation into bacterial lipopolysaccharide in Gram-negative bacteria. This chain is 3-deoxy-manno-octulosonate cytidylyltransferase, found in Anaeromyxobacter dehalogenans (strain 2CP-1 / ATCC BAA-258).